The chain runs to 91 residues: Transcription factor ILI7 (91 aa).

In terms of domain architecture, bHLH spans 4–58; that stretch reads RSRSRASSAARITDEQIGDLVSKLQALLPEARLRSNDRVPSARVLQETCSYIRSL.

It belongs to the bHLH protein family.

Atypical and probable non DNA-binding bHLH transcription factor that integrates multiple signaling pathways to regulate cell elongation and plant development. The chain is Transcription factor ILI7 (ILI7) from Oryza sativa subsp. indica (Rice).